The primary structure comprises 122 residues: Small ribosomal subunit protein bS6 (122 aa).

The interval 96-122 (ETAPSPMMKAVQKEDAAKSHRTEAPAA) is disordered. The segment covering 106-122 (VQKEDAAKSHRTEAPAA) has biased composition (basic and acidic residues).

It belongs to the bacterial ribosomal protein bS6 family.

Its function is as follows. Binds together with bS18 to 16S ribosomal RNA. This Herminiimonas arsenicoxydans protein is Small ribosomal subunit protein bS6.